Consider the following 205-residue polypeptide: Dephospho-CoA kinase (205 aa).

Positions Lys-4–Lys-203 constitute a DPCK domain. Residue Gly-12–Val-17 participates in ATP binding.

Belongs to the CoaE family.

The protein resides in the cytoplasm. It catalyses the reaction 3'-dephospho-CoA + ATP = ADP + CoA + H(+). It participates in cofactor biosynthesis; coenzyme A biosynthesis; CoA from (R)-pantothenate: step 5/5. Functionally, catalyzes the phosphorylation of the 3'-hydroxyl group of dephosphocoenzyme A to form coenzyme A. The sequence is that of Dephospho-CoA kinase from Bacteroides fragilis (strain YCH46).